The primary structure comprises 4115 residues: Transcription-associated protein 1 (4115 aa).

A compositionally biased stretch (polar residues) spans 1-11; the sequence is MDPSIPSTSHR. 2 disordered regions span residues 1–21 and 543–563; these read MDPSIPSTSHRSVPPDRGVQP and ESEQKRNELPTPTKEHTKKTS. The segment covering 544–563 has biased composition (basic and acidic residues); sequence SEQKRNELPTPTKEHTKKTS. TPR repeat units follow at residues 1341–1374 and 1820–1853; these read LDGLQRFVFICPEGFEFEKDSEIYKRYLVHLLDL and QDYDMFFNVVSVFMGKFQTDFTFVREYLEVEVIP. The tract at residues 2678–2701 is disordered; it reads LEEPEPMEVDQPKNAPAEEPKDNK. In terms of domain architecture, FAT spans 2808–3421; it reads LIEFISSKHE…SNGASKVSKS (614 aa). Residues 2855 to 2888 form a TPR 3 repeat; the sequence is IETLESLGALYKELAEFDQYSAIWERRSVFPETM. Positions 3740–4100 constitute a PI3K/PI4K catalytic domain; that stretch reads EPYFEIVMRG…CNSLIIRAKD (361 aa). The interval 3746–3752 is G-loop; it reads VMRGGQV. A catalytic loop region spans residues 3959-3967; that stretch reads NLSPMTPHQ. Positions 3979-4006 are activation loop; that stretch reads NPFYRFELGTGQLMDIEHFAHEVPFRLT. In terms of domain architecture, FATC spans 4083–4115; sequence DAKVKKDDCNSLIIRAKDSDNLSRMPPTYHAWF.

Belongs to the PI3/PI4-kinase family. TRA1 subfamily.

It localises to the nucleus. Its function is as follows. Influences germ cell fate in hermaphrodites. Acts downstream of tra-2 and tra-3 and through the Tip60 histone acetyltransferase complex to regulate germ cell fate decisions. Required for spermatogenesis and embryonic development. Acts with tra-2 to promote expression of fog-3 and control male tail development. Involved in the negative regulation of vulval development. The polypeptide is Transcription-associated protein 1 (Caenorhabditis briggsae).